The chain runs to 369 residues: Protein HGH1 homolog (369 aa).

Belongs to the HGH1 family.

This Drosophila melanogaster (Fruit fly) protein is Protein HGH1 homolog.